The sequence spans 179 residues: Bifunctional protein PyrR (179 aa).

Positions 100–112 (VILVDDVLFTGRT) match the PRPP-binding motif.

It belongs to the purine/pyrimidine phosphoribosyltransferase family. PyrR subfamily. In terms of assembly, homodimer and homohexamer; in equilibrium.

It carries out the reaction UMP + diphosphate = 5-phospho-alpha-D-ribose 1-diphosphate + uracil. Regulates transcriptional attenuation of the pyrimidine nucleotide (pyr) operon by binding in a uridine-dependent manner to specific sites on pyr mRNA. This disrupts an antiterminator hairpin in the RNA and favors formation of a downstream transcription terminator, leading to a reduced expression of downstream genes. In terms of biological role, also displays a weak uracil phosphoribosyltransferase activity which is not physiologically significant. The protein is Bifunctional protein PyrR of Geobacillus sp. (strain WCH70).